Here is a 563-residue protein sequence, read N- to C-terminus: Group II intron-interrupted relaxase LtrB (563 aa).

Tyr-44 is a catalytic residue. His-159 and His-161 together coordinate Mg(2+).

The protein belongs to the mobilization (MOB) protein type 1 family. Mg(2+) is required as a cofactor. Requires Mn(2+) as cofactor.

Mediates initiation of conjugal transfer possibly by introducing a single-stranded nick at the potential origin of transfer. The chain is Group II intron-interrupted relaxase LtrB (ltrBE1) from Lactococcus lactis subsp. cremoris (strain MG1363).